A 469-amino-acid chain; its full sequence is Argininosuccinate lyase (469 aa).

Belongs to the lyase 1 family. Argininosuccinate lyase subfamily.

It localises to the cytoplasm. The enzyme catalyses 2-(N(omega)-L-arginino)succinate = fumarate + L-arginine. The protein operates within amino-acid biosynthesis; L-arginine biosynthesis; L-arginine from L-ornithine and carbamoyl phosphate: step 3/3. This Burkholderia mallei (strain NCTC 10247) protein is Argininosuccinate lyase.